The primary structure comprises 593 residues: ATP-dependent RNA helicase MRH4, mitochondrial (593 aa).

The N-terminal 106 residues, 1 to 106 (MFPLRAQSAS…QLRIFPTVRA (106 aa)), are a transit peptide targeting the mitochondrion. Residues 42–51 (GANGANRANG) show a composition bias toward low complexity. Residues 42–63 (GANGANRANGTNSSQPESQSSK) form a disordered region. Positions 52 to 63 (TNSSQPESQSSK) are enriched in polar residues. Positions 130-137 (VLKPTPIQ) match the Q motif motif. The Helicase ATP-binding domain occupies 181 to 399 (INSLQKLKVF…NRIFPTDDSI (219 aa)). 194–201 (AETGSGKT) is a binding site for ATP. Residues 347–350 (DEAD) carry the DEAD box motif. The region spanning 433–593 (ALAQALYAIT…NAVKRGIQMG (161 aa)) is the Helicase C-terminal domain.

Belongs to the DEAD box helicase family. MRH4 subfamily.

Its subcellular location is the mitochondrion. The catalysed reaction is ATP + H2O = ADP + phosphate + H(+). Functionally, ATP-binding RNA helicase involved in mitochondrial RNA metabolism. Required for maintenance of mitochondrial DNA. This is ATP-dependent RNA helicase MRH4, mitochondrial (MRH4) from Scheffersomyces stipitis (strain ATCC 58785 / CBS 6054 / NBRC 10063 / NRRL Y-11545) (Yeast).